A 417-amino-acid chain; its full sequence is uncharacterized protein (417 aa).

2 disordered regions span residues 44–83 (FTNE…VRSR) and 325–346 (VQSA…PPKE). A compositionally biased stretch (low complexity) spans 54–64 (SNYSTSGYDSS). Over residues 65 to 76 (AETISANSSPIN) the composition is skewed to polar residues. Over residues 326-339 (QSARKNQKKGRKNR) the composition is skewed to basic residues. Residues 362 to 382 (FLIIGVYVLVFIYVCTNVLTV) form a helical membrane-spanning segment.

It localises to the membrane. This is an uncharacterized protein from Caenorhabditis elegans.